The primary structure comprises 58 residues: Small ribosomal subunit protein bS21 (58 aa).

Residues 34 to 58 (KREHYESPSVRRKKKSEAARRRKRR) form a disordered region. Residues 43–58 (VRRKKKSEAARRRKRR) show a composition bias toward basic residues.

It belongs to the bacterial ribosomal protein bS21 family.

In Caldicellulosiruptor bescii (strain ATCC BAA-1888 / DSM 6725 / KCTC 15123 / Z-1320) (Anaerocellum thermophilum), this protein is Small ribosomal subunit protein bS21.